The primary structure comprises 194 residues: Ribonuclease HII (194 aa).

Positions 3-193 constitute an RNase H type-2 domain; it reads ILTAGVDEAG…VRNLLAQQAL (191 aa). A divalent metal cation-binding residues include Asp9, Glu10, and Asp101.

Belongs to the RNase HII family. It depends on Mn(2+) as a cofactor. Requires Mg(2+) as cofactor.

The protein resides in the cytoplasm. It carries out the reaction Endonucleolytic cleavage to 5'-phosphomonoester.. Endonuclease that specifically degrades the RNA of RNA-DNA hybrids. This Neisseria meningitidis serogroup B (strain ATCC BAA-335 / MC58) protein is Ribonuclease HII (rnhB).